A 373-amino-acid chain; its full sequence is 3 beta-hydroxysteroid dehydrogenase/Delta 5--&gt;4-isomerase type 2 (373 aa).

The active-site Proton acceptor is Tyr-155. NAD(+) is bound at residue Lys-159. The helical transmembrane segment at 288–308 threads the bilayer; that stretch reads VALLYWLGFLLELVNFLLRPV.

This sequence belongs to the 3-beta-HSD family. In terms of tissue distribution, high levels in adrenal gland, kidney and male liver. Low levels in female liver.

It localises to the endoplasmic reticulum membrane. Its subcellular location is the mitochondrion membrane. It catalyses the reaction a 3beta-hydroxy-Delta(5)-steroid + NAD(+) = a 3-oxo-Delta(5)-steroid + NADH + H(+). The catalysed reaction is a 3-oxo-Delta(5)-steroid = a 3-oxo-Delta(4)-steroid. It carries out the reaction pregnenolone + NAD(+) = pregn-5-ene-3,20-dione + NADH + H(+). The enzyme catalyses pregn-5-ene-3,20-dione = progesterone. It catalyses the reaction 3beta-hydroxyandrost-5-en-17-one + NAD(+) = androst-5-ene-3,17-dione + NADH + H(+). The catalysed reaction is androst-5-ene-3,17-dione = androst-4-ene-3,17-dione. It functions in the pathway lipid metabolism; steroid biosynthesis. 3-beta-HSD is a bifunctional enzyme, that catalyzes the oxidative conversion of Delta(5)-ene-3-beta-hydroxy steroid, and the oxidative conversion of ketosteroids. The 3-beta-HSD enzymatic system plays a crucial role in the biosynthesis of all classes of hormonal steroids. This is 3 beta-hydroxysteroid dehydrogenase/Delta 5--&gt;4-isomerase type 2 (HSD3B2) from Mesocricetus auratus (Golden hamster).